The sequence spans 71 residues: NAD(P)H-quinone oxidoreductase subunit O (71 aa).

This sequence belongs to the complex I NdhO subunit family. In terms of assembly, NDH-1 can be composed of about 15 different subunits; different subcomplexes with different compositions have been identified which probably have different functions.

The protein resides in the cellular thylakoid membrane. It catalyses the reaction a plastoquinone + NADH + (n+1) H(+)(in) = a plastoquinol + NAD(+) + n H(+)(out). The catalysed reaction is a plastoquinone + NADPH + (n+1) H(+)(in) = a plastoquinol + NADP(+) + n H(+)(out). Functionally, NDH-1 shuttles electrons from an unknown electron donor, via FMN and iron-sulfur (Fe-S) centers, to quinones in the respiratory and/or the photosynthetic chain. The immediate electron acceptor for the enzyme in this species is believed to be plastoquinone. Couples the redox reaction to proton translocation, and thus conserves the redox energy in a proton gradient. Cyanobacterial NDH-1 also plays a role in inorganic carbon-concentration. The sequence is that of NAD(P)H-quinone oxidoreductase subunit O from Picosynechococcus sp. (strain ATCC 27264 / PCC 7002 / PR-6) (Agmenellum quadruplicatum).